The following is a 459-amino-acid chain: Cysteine--tRNA ligase (459 aa).

Cys-27 contributes to the Zn(2+) binding site. A 'HIGH' region motif is present at residues 29–39 (VTVYDDCHIGH). Positions 208, 233, and 237 each coordinate Zn(2+). The short motif at 265-269 (KMSKS) is the 'KMSKS' region element. Residue Lys-268 coordinates ATP.

The protein belongs to the class-I aminoacyl-tRNA synthetase family. Monomer. Zn(2+) serves as cofactor.

It is found in the cytoplasm. The enzyme catalyses tRNA(Cys) + L-cysteine + ATP = L-cysteinyl-tRNA(Cys) + AMP + diphosphate. The sequence is that of Cysteine--tRNA ligase from Francisella tularensis subsp. novicida (strain U112).